A 98-amino-acid polypeptide reads, in one-letter code: DNA-directed RNA polymerase subunit Rpo11 (98 aa).

It belongs to the archaeal Rpo11/eukaryotic RPB11/RPC19 RNA polymerase subunit family. In terms of assembly, part of the RNA polymerase complex.

The protein resides in the cytoplasm. The enzyme catalyses RNA(n) + a ribonucleoside 5'-triphosphate = RNA(n+1) + diphosphate. In terms of biological role, DNA-dependent RNA polymerase (RNAP) catalyzes the transcription of DNA into RNA using the four ribonucleoside triphosphates as substrates. In Korarchaeum cryptofilum (strain OPF8), this protein is DNA-directed RNA polymerase subunit Rpo11.